The sequence spans 233 residues: Small ribosomal subunit protein uS2 (233 aa).

This sequence belongs to the universal ribosomal protein uS2 family.

This chain is Small ribosomal subunit protein uS2, found in Clostridium beijerinckii (strain ATCC 51743 / NCIMB 8052) (Clostridium acetobutylicum).